Reading from the N-terminus, the 440-residue chain is Serine hydroxymethyltransferase (440 aa).

(6S)-5,6,7,8-tetrahydrofolate contacts are provided by residues Leu-119 and 123–125; that span reads GHL. Position 228 is an N6-(pyridoxal phosphate)lysine (Lys-228). 370-372 is a (6S)-5,6,7,8-tetrahydrofolate binding site; sequence SPF.

Belongs to the SHMT family. Homodimer. Pyridoxal 5'-phosphate is required as a cofactor.

It localises to the cytoplasm. The enzyme catalyses (6R)-5,10-methylene-5,6,7,8-tetrahydrofolate + glycine + H2O = (6S)-5,6,7,8-tetrahydrofolate + L-serine. It participates in one-carbon metabolism; tetrahydrofolate interconversion. Its pathway is amino-acid biosynthesis; glycine biosynthesis; glycine from L-serine: step 1/1. Its function is as follows. Catalyzes the reversible interconversion of serine and glycine with tetrahydrofolate (THF) serving as the one-carbon carrier. This reaction serves as the major source of one-carbon groups required for the biosynthesis of purines, thymidylate, methionine, and other important biomolecules. Also exhibits THF-independent aldolase activity toward beta-hydroxyamino acids, producing glycine and aldehydes, via a retro-aldol mechanism. The sequence is that of Serine hydroxymethyltransferase from Chlorobaculum tepidum (strain ATCC 49652 / DSM 12025 / NBRC 103806 / TLS) (Chlorobium tepidum).